The primary structure comprises 500 residues: Glutamate--tRNA ligase (500 aa).

The 'HIGH' region signature appears at 12 to 22 (PSPTGHLHIGN). A 'KMSKS' region motif is present at residues 259-263 (KLSKR). ATP is bound at residue Lys262.

The protein belongs to the class-I aminoacyl-tRNA synthetase family. Glutamate--tRNA ligase type 1 subfamily. Monomer.

It localises to the cytoplasm. It catalyses the reaction tRNA(Glu) + L-glutamate + ATP = L-glutamyl-tRNA(Glu) + AMP + diphosphate. In terms of biological role, catalyzes the attachment of glutamate to tRNA(Glu) in a two-step reaction: glutamate is first activated by ATP to form Glu-AMP and then transferred to the acceptor end of tRNA(Glu). The chain is Glutamate--tRNA ligase from Lactobacillus delbrueckii subsp. bulgaricus (strain ATCC 11842 / DSM 20081 / BCRC 10696 / JCM 1002 / NBRC 13953 / NCIMB 11778 / NCTC 12712 / WDCM 00102 / Lb 14).